Consider the following 414-residue polypeptide: GPI mannosyltransferase 1 (414 aa).

10 helical membrane-spanning segments follow: residues 6–26, 87–107, 119–139, 149–171, 183–203, 213–233, 282–302, 316–336, 356–376, and 387–407; these read ISHIIVLSLLIRIGFFLFGLY, YIFMISDLITGIIILKLLSGI, IIMLSSIWLLNPMVITISTRG, IMLSLYYLINKKSIIASGFWLGL, LPSIMLYLSTSGTPFIDVPIV, FLITTLITIGAFNGIMYSIYG, MEKFVMLPQLSISALILPLLF, FAFVTFNKVITSQYFIWFLIF, IVALLLWIVSQGSWLYFAYQL, and GLLFSSFFFYISNCWILSVFI.

This sequence belongs to the PIGM family.

It localises to the endoplasmic reticulum membrane. Its pathway is glycolipid biosynthesis; glycosylphosphatidylinositol-anchor biosynthesis. Mannosyltransferase involved in glycosylphosphatidylinositol-anchor biosynthesis. Transfers the first alpha-1,4-mannose to GlcN-acyl-PI during GPI precursor assembly. Required for cell wall integrity. The sequence is that of GPI mannosyltransferase 1 (GPI14) from Debaryomyces hansenii (strain ATCC 36239 / CBS 767 / BCRC 21394 / JCM 1990 / NBRC 0083 / IGC 2968) (Yeast).